Consider the following 332-residue polypeptide: MNWLTNVVRPKIRNILRRETPENLWIKCPDSGHLVFYKDVEANQFVIPGSNYHMRMGAAARLKSIFDNETWYDIALPEVTPDPLKFRDERKYVDRIKDARAKTGMNDAIKVGYGKLEGGAVVVAVQDFDFMGGSLGMAAGEAIVRGIELAVEKQSPFILFAASGGARMQEGILSLMQMPRTTVGVQMLRDAKLPYIVVLTNPTTGGVTASYAMLGDVQIAEPGALIGFAGARVIEQTIREKLPEGFQRAEYLKEHGMIDMVVHRHDLKATLARLCRLLTKAPMPEVIVESEPEPEPEPVVAEIIPPTSDLPVSAPAPAPVAAQTPAPAAPSA.

The CoA carboxyltransferase N-terminal domain occupies 24-293; sequence LWIKCPDSGH…PEVIVESEPE (270 aa). A disordered region spans residues 288 to 332; sequence VESEPEPEPEPVVAEIIPPTSDLPVSAPAPAPVAAQTPAPAAPSA. The segment covering 298–332 has biased composition (low complexity); sequence PVVAEIIPPTSDLPVSAPAPAPVAAQTPAPAAPSA.

It belongs to the AccD/PCCB family. In terms of assembly, acetyl-CoA carboxylase is a heterohexamer composed of biotin carboxyl carrier protein (AccB), biotin carboxylase (AccC) and two subunits each of ACCase subunit alpha (AccA) and ACCase subunit beta (AccD).

It is found in the cytoplasm. It catalyses the reaction N(6)-carboxybiotinyl-L-lysyl-[protein] + acetyl-CoA = N(6)-biotinyl-L-lysyl-[protein] + malonyl-CoA. It participates in lipid metabolism; malonyl-CoA biosynthesis; malonyl-CoA from acetyl-CoA: step 1/1. Its function is as follows. Component of the acetyl coenzyme A carboxylase (ACC) complex. Biotin carboxylase (BC) catalyzes the carboxylation of biotin on its carrier protein (BCCP) and then the CO(2) group is transferred by the transcarboxylase to acetyl-CoA to form malonyl-CoA. The chain is Acetyl-coenzyme A carboxylase carboxyl transferase subunit beta from Rhodopseudomonas palustris (strain BisB18).